A 367-amino-acid polypeptide reads, in one-letter code: NADH-quinone oxidoreductase subunit D (367 aa).

It belongs to the complex I 49 kDa subunit family. As to quaternary structure, NDH-1 is composed of 14 different subunits. Subunits NuoB, C, D, E, F, and G constitute the peripheral sector of the complex.

The protein resides in the cell membrane. The enzyme catalyses a quinone + NADH + 5 H(+)(in) = a quinol + NAD(+) + 4 H(+)(out). Its function is as follows. NDH-1 shuttles electrons from NADH, via FMN and iron-sulfur (Fe-S) centers, to quinones in the respiratory chain. The immediate electron acceptor for the enzyme in this species is believed to be ubiquinone. Couples the redox reaction to proton translocation (for every two electrons transferred, four hydrogen ions are translocated across the cytoplasmic membrane), and thus conserves the redox energy in a proton gradient. The polypeptide is NADH-quinone oxidoreductase subunit D (Dehalococcoides mccartyi (strain CBDB1)).